A 406-amino-acid polypeptide reads, in one-letter code: Argininosuccinate synthase (406 aa).

ATP-binding positions include 11 to 19 (AYSGGLDTS) and A38. 2 residues coordinate L-citrulline: Y91 and S96. Residue G121 participates in ATP binding. 3 residues coordinate L-aspartate: T123, N127, and D128. N127 is an L-citrulline binding site. R131, S181, S190, E266, and Y278 together coordinate L-citrulline.

It belongs to the argininosuccinate synthase family. Type 1 subfamily. Homotetramer.

It localises to the cytoplasm. The catalysed reaction is L-citrulline + L-aspartate + ATP = 2-(N(omega)-L-arginino)succinate + AMP + diphosphate + H(+). The protein operates within amino-acid biosynthesis; L-arginine biosynthesis; L-arginine from L-ornithine and carbamoyl phosphate: step 2/3. The chain is Argininosuccinate synthase from Campylobacter curvus (strain 525.92).